We begin with the raw amino-acid sequence, 314 residues long: Aspartate carbamoyltransferase catalytic subunit (314 aa).

Residues Arg-53 and Thr-54 each coordinate carbamoyl phosphate. Position 82 (Lys-82) interacts with L-aspartate. The carbamoyl phosphate site is built by Arg-103, His-131, and Gln-134. 2 residues coordinate L-aspartate: Arg-164 and Arg-230. Residues Leu-267 and Pro-268 each contribute to the carbamoyl phosphate site.

Belongs to the aspartate/ornithine carbamoyltransferase superfamily. ATCase family. Heterooligomer of catalytic and regulatory chains.

The catalysed reaction is carbamoyl phosphate + L-aspartate = N-carbamoyl-L-aspartate + phosphate + H(+). The protein operates within pyrimidine metabolism; UMP biosynthesis via de novo pathway; (S)-dihydroorotate from bicarbonate: step 2/3. In terms of biological role, catalyzes the condensation of carbamoyl phosphate and aspartate to form carbamoyl aspartate and inorganic phosphate, the committed step in the de novo pyrimidine nucleotide biosynthesis pathway. The polypeptide is Aspartate carbamoyltransferase catalytic subunit (Methanococcus aeolicus (strain ATCC BAA-1280 / DSM 17508 / OCM 812 / Nankai-3)).